The primary structure comprises 578 residues: A-type ATP synthase subunit A (578 aa).

ATP is bound at residue 228 to 235 (GPFGSGKT).

The protein belongs to the ATPase alpha/beta chains family. Has multiple subunits with at least A(3), B(3), C, D, E, F, H, I and proteolipid K(x).

The protein localises to the cell membrane. It catalyses the reaction ATP + H2O + 4 H(+)(in) = ADP + phosphate + 5 H(+)(out). Component of the A-type ATP synthase that produces ATP from ADP in the presence of a proton gradient across the membrane. The A chain is the catalytic subunit. This chain is A-type ATP synthase subunit A, found in Methanococcoides burtonii (strain DSM 6242 / NBRC 107633 / OCM 468 / ACE-M).